Here is a 512-residue protein sequence, read N- to C-terminus: Histidine ammonia-lyase (512 aa).

Residues 142 to 144 (ASG) constitute a cross-link (5-imidazolinone (Ala-Gly)). At Ser143 the chain carries 2,3-didehydroalanine (Ser).

This sequence belongs to the PAL/histidase family. Post-translationally, contains an active site 4-methylidene-imidazol-5-one (MIO), which is formed autocatalytically by cyclization and dehydration of residues Ala-Ser-Gly.

The protein resides in the cytoplasm. It carries out the reaction L-histidine = trans-urocanate + NH4(+). It participates in amino-acid degradation; L-histidine degradation into L-glutamate; N-formimidoyl-L-glutamate from L-histidine: step 1/3. The polypeptide is Histidine ammonia-lyase (Bartonella quintana (strain Toulouse) (Rochalimaea quintana)).